A 600-amino-acid polypeptide reads, in one-letter code: Pyranose dehydrogenase (600 aa).

An N-terminal signal peptide occupies residues M1–G25. N-linked (GlcNAc...) asparagine glycosylation is found at N99 and N114. Tele-8alpha-FAD histidine is present on H127. 5 N-linked (GlcNAc...) asparagine glycosylation sites follow: N199, N275, N342, N399, and N507. The active-site Proton acceptor is H535. N546 is a glycosylation site (N-linked (GlcNAc...) asparagine). H579 is an active-site residue.

Belongs to the GMC oxidoreductase family. In terms of assembly, monomer. FAD serves as cofactor. In terms of processing, N-glycosylated.

It localises to the secreted. It carries out the reaction pyranose + acceptor = pyranos-2-ulose + reduced acceptor.. The catalysed reaction is pyranose + acceptor = pyranos-3-ulose + reduced acceptor.. The enzyme catalyses pyranose + acceptor = pyranos-2,3-diulose + reduced acceptor.. It catalyses the reaction a pyranoside + acceptor = a pyranosid-3-ulose + reduced acceptor.. It carries out the reaction a pyranoside + acceptor = a pyranosid-3,4-diulose + reduced acceptor.. Its function is as follows. Catalyzes the single-oxidation or sequential double oxidation reaction of carbohydrates primarily at carbon-2 and/or carbon-3 with the concomitant reduction of the flavin. The enzyme exhibits a broad sugar substrate specificity, oxidizing different aldopyranoses to the corresponding C-1, C-2, C-3 or C-1,2, C-2,3 and C-3,4 (di)dehydro sugars with substrate-specific regioselectivity. Accepts only a narrow range of electron acceptors such as substituted benzoquinones and complexed metal ions and reacts extremely slowly with O(2) as acceptor. May play a role in the natural recycling of plant matter by oxidizing all major monosaccharides in lignocellulose and by reducing quinone compounds or reactive radical species generated during lignin depolymerization. In Agaricus xanthodermus (Poison yellow meadow mushroom), this protein is Pyranose dehydrogenase.